The primary structure comprises 630 residues: DNA topoisomerase 4 subunit B (630 aa).

ATP-binding positions include Tyr-5, Asn-42, Asp-69, 110-116 (GLHGVGI), and Lys-334. Residues 412 to 525 (TELFLVEGDS…HGHVYVALPP (114 aa)) form the Toprim domain. Positions 418, 490, and 492 each coordinate Mg(2+).

It belongs to the type II topoisomerase family. ParE type 1 subfamily. Heterotetramer composed of ParC and ParE. It depends on Mg(2+) as a cofactor. Requires Mn(2+) as cofactor. Ca(2+) serves as cofactor.

It catalyses the reaction ATP-dependent breakage, passage and rejoining of double-stranded DNA.. Its activity is regulated as follows. Pyrrolopyrimidines inhibit both GyrB and its paralog in topoisomerase IV (parE). Functionally, topoisomerase IV is essential for chromosome segregation; it is the principal protein responsible for decatenating newly replicated chromosomes. It relaxes supercoiled DNA. MukB stimulates the relaxation activity of topoisomerase IV and also has a modest effect on decatenation. The polypeptide is DNA topoisomerase 4 subunit B (Escherichia coli (strain K12)).